The sequence spans 115 residues: Hydrogenase maturation factor HypA (115 aa).

His-2 lines the Ni(2+) pocket. Residues Cys-73, Cys-76, Cys-89, and Cys-92 each contribute to the Zn(2+) site.

It belongs to the HypA/HybF family.

Functionally, involved in the maturation of [NiFe] hydrogenases. Required for nickel insertion into the metal center of the hydrogenase. This chain is Hydrogenase maturation factor HypA, found in Parabacteroides distasonis (strain ATCC 8503 / DSM 20701 / CIP 104284 / JCM 5825 / NCTC 11152).